We begin with the raw amino-acid sequence, 251 residues long: HTH-type transcriptional regulator UlaR (251 aa).

Residues 3–58 (EAQRHQILLEMLAQLGFVTVEKVVERLGISPATARRDINKLDESGKLKKVRNGAEA) enclose the HTH deoR-type domain. Residues 20-39 (VTVEKVVERLGISPATARRD) constitute a DNA-binding region (H-T-H motif).

The protein resides in the cytoplasm. In terms of biological role, represses ulaG and the ulaABCDEF operon. This Shigella dysenteriae serotype 1 (strain Sd197) protein is HTH-type transcriptional regulator UlaR.